A 190-amino-acid polypeptide reads, in one-letter code: A-type ATP synthase subunit E (190 aa).

The protein belongs to the V-ATPase E subunit family. Has multiple subunits with at least A(3), B(3), C, D, E, F, H, I and proteolipid K(x).

Its subcellular location is the cell membrane. In terms of biological role, component of the A-type ATP synthase that produces ATP from ADP in the presence of a proton gradient across the membrane. In Pyrobaculum islandicum (strain DSM 4184 / JCM 9189 / GEO3), this protein is A-type ATP synthase subunit E.